A 181-amino-acid polypeptide reads, in one-letter code: Adenine phosphoribosyltransferase (181 aa).

Belongs to the purine/pyrimidine phosphoribosyltransferase family. Homodimer.

The protein resides in the cytoplasm. The catalysed reaction is AMP + diphosphate = 5-phospho-alpha-D-ribose 1-diphosphate + adenine. It functions in the pathway purine metabolism; AMP biosynthesis via salvage pathway; AMP from adenine: step 1/1. Catalyzes a salvage reaction resulting in the formation of AMP, that is energically less costly than de novo synthesis. The protein is Adenine phosphoribosyltransferase of Shewanella amazonensis (strain ATCC BAA-1098 / SB2B).